A 534-amino-acid polypeptide reads, in one-letter code: GPI transamidase component GPI17 (534 aa).

Topologically, residues 1–8 (MSNANLRK) are cytoplasmic. A helical transmembrane segment spans residues 9–29 (WVGFCFVAIYLFLGVPLWYKL). Over 30–472 (TTVYRASLPI…VQQNFFPQEH (443 aa)) the chain is Lumenal. Residues asparagine 100, asparagine 170, asparagine 228, asparagine 247, and asparagine 299 are each glycosylated (N-linked (GlcNAc...) asparagine). A helical transmembrane segment spans residues 473 to 493 (MIAVYLPLLGPISAVMFFGFY). Over 494-534 (NVMKEKNQKSKKNGTEREVAKEKLELKEAQKLHAIDGEDEL) the chain is Cytoplasmic.

The protein belongs to the PIGS family. Forms a complex with CDC91, GPI16, GPI8 and GAA1. In terms of processing, N-glycosylated.

The protein resides in the endoplasmic reticulum membrane. It participates in glycolipid biosynthesis; glycosylphosphatidylinositol-anchor biosynthesis. Functionally, component of the GPI transamidase complex. Involved in transfer of GPI to proteins. This is GPI transamidase component GPI17 (GPI17) from Saccharomyces cerevisiae (strain ATCC 204508 / S288c) (Baker's yeast).